The primary structure comprises 186 residues: Glutathione peroxidase 7 (186 aa).

A signal peptide spans 1 to 18 (MVAARAAAWLLLAAAACA). The active site involves cysteine 56.

It belongs to the glutathione peroxidase family.

Its subcellular location is the secreted. The enzyme catalyses 2 glutathione + H2O2 = glutathione disulfide + 2 H2O. The chain is Glutathione peroxidase 7 (GPX7) from Bos taurus (Bovine).